We begin with the raw amino-acid sequence, 137 residues long: uncharacterized protein (137 aa).

Residues 20–42 (TVLAFKGEGALALAGLLVMAAVA) form a helical membrane-spanning segment.

Its subcellular location is the host membrane. This is an uncharacterized protein from Dryophytes versicolor (chameleon treefrog).